A 409-amino-acid polypeptide reads, in one-letter code: Growth-regulating factor 8 (409 aa).

2 stretches are compositionally biased toward gly residues: residues 1–10 and 27–36; these read MLSSCGGHGH and QQGGGGGGGQ. Residues 1–81 are disordered; the sequence is MLSSCGGHGH…GGGGQMLSFS (81 aa). The segment covering 56 to 68 has biased composition (low complexity); the sequence is SSSSFLGSTSSSC. Residues 107–142 form the QLQ domain; it reads PFTPTQWMELEHQALIYKHIAANVSVPSSLLLPIRR. The 45-residue stretch at 158–202 folds into the WRC domain; sequence DVEPRRCRRTDGKKWRCSRDAVGDQKYCERHINRGRHRSRKHVEG. Short sequence motifs (bipartite nuclear localization signal) lie at residues 163 to 173 and 191 to 198; these read RCRRTDGKKWR and RGRHRSRK. Residues 221-242 form a disordered region; the sequence is SSRGHTVARQKQVKGSAATVSD.

Belongs to the GRF family.

The protein localises to the nucleus. Functionally, transcription activator that plays a regulatory role in gibberellin-induced stem elongation. The polypeptide is Growth-regulating factor 8 (GRF8) (Oryza sativa subsp. japonica (Rice)).